A 492-amino-acid chain; its full sequence is Regulatory protein ViaA (492 aa).

This sequence belongs to the ViaA family. Homodimer. Interacts with RavA.

It is found in the cytoplasm. Its function is as follows. Component of the RavA-ViaA chaperone complex, which may act on the membrane to optimize the function of some of the respiratory chains. ViaA stimulates the ATPase activity of RavA. The sequence is that of Regulatory protein ViaA from Pectobacterium atrosepticum (strain SCRI 1043 / ATCC BAA-672) (Erwinia carotovora subsp. atroseptica).